The chain runs to 329 residues: Small ribosomal subunit protein uS2 (329 aa).

The protein belongs to the universal ribosomal protein uS2 family.

The polypeptide is Small ribosomal subunit protein uS2 (Bradyrhizobium sp. (strain ORS 278)).